The chain runs to 957 residues: Glycine dehydrogenase (decarboxylating) (957 aa).

N6-(pyridoxal phosphate)lysine is present on Lys702.

The protein belongs to the GcvP family. In terms of assembly, the glycine cleavage system is composed of four proteins: P, T, L and H. It depends on pyridoxal 5'-phosphate as a cofactor.

The enzyme catalyses N(6)-[(R)-lipoyl]-L-lysyl-[glycine-cleavage complex H protein] + glycine + H(+) = N(6)-[(R)-S(8)-aminomethyldihydrolipoyl]-L-lysyl-[glycine-cleavage complex H protein] + CO2. The glycine cleavage system catalyzes the degradation of glycine. The P protein binds the alpha-amino group of glycine through its pyridoxal phosphate cofactor; CO(2) is released and the remaining methylamine moiety is then transferred to the lipoamide cofactor of the H protein. The polypeptide is Glycine dehydrogenase (decarboxylating) (Bradyrhizobium sp. (strain BTAi1 / ATCC BAA-1182)).